The following is a 255-amino-acid chain: Ribosomal RNA large subunit methyltransferase E (255 aa).

S-adenosyl-L-methionine contacts are provided by G50, W52, D68, D84, and D108. The active-site Proton acceptor is the K148. In terms of domain architecture, TRAM spans 195 to 253 (PVRSGEIYDVTVDSVGRTGDGIAMIQGFAVIVKNASPGERLRIKIGPVKQRFAFASILE).

It belongs to the class I-like SAM-binding methyltransferase superfamily. RNA methyltransferase RlmE family.

The protein localises to the cytoplasm. The catalysed reaction is uridine(2552) in 23S rRNA + S-adenosyl-L-methionine = 2'-O-methyluridine(2552) in 23S rRNA + S-adenosyl-L-homocysteine + H(+). Its function is as follows. Specifically methylates the uridine in position 2552 of 23S rRNA at the 2'-O position of the ribose in the fully assembled 50S ribosomal subunit. This chain is Ribosomal RNA large subunit methyltransferase E, found in Methanothrix thermoacetophila (strain DSM 6194 / JCM 14653 / NBRC 101360 / PT) (Methanosaeta thermophila).